The chain runs to 566 residues: Repressible alkaline phosphatase (566 aa).

The span at 1–11 shows a compositional bias: polar residues; it reads MMTHTLPSEQT. The disordered stretch occupies residues 1 to 27; it reads MMTHTLPSEQTRLVPGSDSSSRPKKRR. Topologically, residues 1 to 33 are cytoplasmic; that stretch reads MMTHTLPSEQTRLVPGSDSSSRPKKRRISKRSK. Residues 34–59 traverse the membrane as a helical segment; it reads IIVSTVVCIGLLLVLVQLAFPSSFAL. Aspartate 75 is a binding site for Mg(2+). Residue aspartate 75 coordinates Zn(2+). Serine 123 functions as the Phosphoserine intermediate in the catalytic mechanism. Phosphoserine is present on serine 123. Mg(2+)-binding residues include aspartate 174 and threonine 176. Asparagine 268 is a glycosylation site (N-linked (GlcNAc...) asparagine). Glutamate 325 lines the Mg(2+) pocket. The Zn(2+) site is built by aspartate 330, histidine 334, aspartate 373, and histidine 374. Residue asparagine 401 is glycosylated (N-linked (GlcNAc...) asparagine). Histidine 484 serves as a coordination point for Zn(2+).

Belongs to the alkaline phosphatase family. Mg(2+) is required as a cofactor. The cofactor is Zn(2+).

It is found in the vacuole membrane. The protein resides in the cytoplasm. The enzyme catalyses a phosphate monoester + H2O = an alcohol + phosphate. It catalyses the reaction (2E,6E)-farnesyl diphosphate + H2O = (2E,6E)-farnesol + diphosphate. The catalysed reaction is beta-D-fructose 2,6-bisphosphate + H2O = beta-D-fructose 2-phosphate + phosphate. In terms of biological role, phosphatase with broad substrate specificity. A truncated (soluble) version of the protein is responsible for the production of (E,E)-farnesol from (E,E)-farnesyl diphosphate. Acts as a fructose-2,6-bisphosphate 6-phosphatase. This chain is Repressible alkaline phosphatase (PHO8), found in Saccharomyces cerevisiae (strain ATCC 204508 / S288c) (Baker's yeast).